Reading from the N-terminus, the 314-residue chain is Ribosomal RNA small subunit methyltransferase H (314 aa).

Residues Gly-36 to His-38, Asp-56, Phe-82, Asp-104, and Gln-111 contribute to the S-adenosyl-L-methionine site.

It belongs to the methyltransferase superfamily. RsmH family.

It localises to the cytoplasm. It carries out the reaction cytidine(1402) in 16S rRNA + S-adenosyl-L-methionine = N(4)-methylcytidine(1402) in 16S rRNA + S-adenosyl-L-homocysteine + H(+). In terms of biological role, specifically methylates the N4 position of cytidine in position 1402 (C1402) of 16S rRNA. This is Ribosomal RNA small subunit methyltransferase H from Ectopseudomonas mendocina (strain ymp) (Pseudomonas mendocina).